The following is a 588-amino-acid chain: Adenine deaminase (588 aa).

Belongs to the metallo-dependent hydrolases superfamily. Adenine deaminase family. Homodimer. Requires Mn(2+) as cofactor.

The catalysed reaction is adenine + H2O + H(+) = hypoxanthine + NH4(+). The protein is Adenine deaminase of Shigella flexneri serotype 5b (strain 8401).